The chain runs to 96 residues: Cell division topological specificity factor (96 aa).

Belongs to the MinE family.

In terms of biological role, prevents the cell division inhibition by proteins MinC and MinD at internal division sites while permitting inhibition at polar sites. This ensures cell division at the proper site by restricting the formation of a division septum at the midpoint of the long axis of the cell. The chain is Cell division topological specificity factor from Nitrosococcus oceani (strain ATCC 19707 / BCRC 17464 / JCM 30415 / NCIMB 11848 / C-107).